The chain runs to 252 residues: Geranylgeranylglyceryl phosphate synthase (252 aa).

Mg(2+) is bound by residues D26 and S55. Sn-glycerol 1-phosphate contacts are provided by residues 174-180 (YLEAGSG), 205-206 (GG), and 227-228 (GT).

This sequence belongs to the GGGP/HepGP synthase family. Group II subfamily. Homotetramer. Homohexamer. Mg(2+) serves as cofactor.

The protein localises to the cytoplasm. The enzyme catalyses sn-glycerol 1-phosphate + (2E,6E,10E)-geranylgeranyl diphosphate = sn-3-O-(geranylgeranyl)glycerol 1-phosphate + diphosphate. The protein operates within membrane lipid metabolism; glycerophospholipid metabolism. Prenyltransferase that catalyzes the transfer of the geranylgeranyl moiety of geranylgeranyl diphosphate (GGPP) to the C3 hydroxyl of sn-glycerol-1-phosphate (G1P). This reaction is the first ether-bond-formation step in the biosynthesis of archaeal membrane lipids. The polypeptide is Geranylgeranylglyceryl phosphate synthase (Thermococcus kodakarensis (strain ATCC BAA-918 / JCM 12380 / KOD1) (Pyrococcus kodakaraensis (strain KOD1))).